A 198-amino-acid polypeptide reads, in one-letter code: GDP-mannose pyrophosphatase (198 aa).

GDP-alpha-D-mannose is bound by residues 38–40, Arg67, and 85–87; these read KRE and AGL. The region spanning 43–180 is the Nudix hydrolase domain; the sequence is DRGNGATVLL…EIRDGKAVIL (138 aa). 3 residues coordinate Mg(2+): Ala85, Glu100, and Glu104. The short motif at 86–106 is the Nudix box element; that stretch reads GLLDNDEPEACIRKEAVEETG. GDP-alpha-D-mannose is bound by residues Glu104, Glu127, 150–151, and Lys176; that span reads DE. Glu151 contacts Mg(2+).

Belongs to the Nudix hydrolase family. NudK subfamily. As to quaternary structure, homodimer. Mg(2+) is required as a cofactor.

The catalysed reaction is GDP-alpha-D-mannose + H2O = alpha-D-mannose 1-phosphate + GMP + 2 H(+). In terms of biological role, nucleoside diphosphate sugar hydrolase that hydrolyzes GDP-mannose as its preferred substrate, yielding GMP and mannose-1-phosphate. This Klebsiella pneumoniae subsp. pneumoniae (strain ATCC 700721 / MGH 78578) protein is GDP-mannose pyrophosphatase (nudK).